Consider the following 62-residue polypeptide: uncharacterized protein (62 aa).

It localises to the plastid. It is found in the chloroplast. This is an uncharacterized protein from Guillardia theta (Cryptophyte).